Reading from the N-terminus, the 82-residue chain is Protein ImpC (82 aa).

This sequence belongs to the DinI family.

The imp operon is involved in UV protection and mutation, however the ImpC protein is not essential for these functions. This is Protein ImpC (impC) from Salmonella typhimurium.